A 212-amino-acid polypeptide reads, in one-letter code: MAQTDKPTCIPPELPKMLKEFAKAAIRVQPQDLIQWAADYFEALSRGETPPVRERSERVALCNRAELTPELLKILHSQVAGRLIIRAEELAQMWKVVNLPTDLFNSVMNVGRFTEEIEWLKFLALACSALGVTITKTLKIVCEVLSCDHNGGSPRIPFSTFQFLYTYIAKVDGEISASHVSRMLNYMEQEVIGPDGIITVNDFTQNPRVQLE.

The RIIa domain maps to 12 to 49 (PELPKMLKEFAKAAIRVQPQDLIQWAADYFEALSRGET). The residue at position 56 (S56) is a Phosphoserine. The interaction with RHPN1 stretch occupies residues 209 to 212 (VQLE).

It belongs to the ropporin family. As to quaternary structure, homodimer. Interacts with AKAP3 and RHPN1. May interact with SPA17. Interacts with FSCB; the interaction increases upon spermatozoa capacitation conditions. Interacts with CFAP61. Post-translationally, sumoylated, sumoylation decreases upon spermatozoa capacitation conditions. Testis specific in adult. Overexpressed in hematologic tumor cells.

It is found in the cell projection. The protein localises to the cilium. The protein resides in the flagellum. Its function is as follows. Important for male fertility. With ROPN1L, involved in fibrous sheath integrity and sperm motility, plays a role in PKA-dependent signaling processes required for spermatozoa capacitation. The protein is Ropporin-1A (ROPN1) of Homo sapiens (Human).